A 428-amino-acid polypeptide reads, in one-letter code: 3-phosphoshikimate 1-carboxyvinyltransferase (428 aa).

Residues Lys22, Ser23, and Arg27 each coordinate 3-phosphoshikimate. Lys22 is a phosphoenolpyruvate binding site. Residues Gly96 and Arg124 each contribute to the phosphoenolpyruvate site. 3-phosphoshikimate-binding residues include Ser169, Ser170, Gln171, Ser197, Asp313, Asn336, and Lys340. Position 171 (Gln171) interacts with phosphoenolpyruvate. The active-site Proton acceptor is Asp313. 3 residues coordinate phosphoenolpyruvate: Arg344, Arg386, and Lys411.

This sequence belongs to the EPSP synthase family. As to quaternary structure, monomer.

It is found in the cytoplasm. The enzyme catalyses 3-phosphoshikimate + phosphoenolpyruvate = 5-O-(1-carboxyvinyl)-3-phosphoshikimate + phosphate. Its pathway is metabolic intermediate biosynthesis; chorismate biosynthesis; chorismate from D-erythrose 4-phosphate and phosphoenolpyruvate: step 6/7. In terms of biological role, catalyzes the transfer of the enolpyruvyl moiety of phosphoenolpyruvate (PEP) to the 5-hydroxyl of shikimate-3-phosphate (S3P) to produce enolpyruvyl shikimate-3-phosphate and inorganic phosphate. The sequence is that of 3-phosphoshikimate 1-carboxyvinyltransferase from Photorhabdus laumondii subsp. laumondii (strain DSM 15139 / CIP 105565 / TT01) (Photorhabdus luminescens subsp. laumondii).